The primary structure comprises 198 residues: Synaptobrevin homolog YKT6-A (198 aa).

Positions V8–L127 constitute a Longin domain. In terms of domain architecture, v-SNARE coiled-coil homology spans P138–M198. C194 is lipidated: S-palmitoyl cysteine. Position 195 is a cysteine methyl ester (C195). C195 is lipidated: S-farnesyl cysteine. A propeptide spans D196–M198 (removed in mature form).

This sequence belongs to the synaptobrevin family. Post-translationally, palmitoylated; catalyzes its own palmitoylation. Palmitoylation is required for Golgi targeting. Farnesylation is required for Golgi targeting.

The protein localises to the cytoplasm. The protein resides in the cytosol. It is found in the cytoplasmic vesicle membrane. It localises to the golgi apparatus membrane. Vesicular soluble NSF attachment protein receptor (v-SNARE) mediating vesicle docking and fusion to a specific acceptor cellular compartment. Functions in endoplasmic reticulum to Golgi transport; as part of a SNARE complex composed of GOSR1, GOSR2 and STX5. Functions in early/recycling endosome to TGN transport; as part of a SNARE complex composed of BET1L, GOSR1 and STX5. Has a S-palmitoyl transferase activity. In Xenopus laevis (African clawed frog), this protein is Synaptobrevin homolog YKT6-A (ykt6-a).